Consider the following 229-residue polypeptide: Aquaporin Z (229 aa).

2 consecutive transmembrane segments (helical) span residues Phe-8–Val-28 and Ile-33–Ile-53. The NPA 1 motif lies at Asn-62–Ala-64. 3 helical membrane passes run Leu-81 to Ile-101, Ala-131 to Thr-151, and Gly-158 to Val-178. Residues Asn-184 to Ala-186 carry the NPA 2 motif. A helical transmembrane segment spans residues Ala-199–Leu-219.

Belongs to the MIP/aquaporin (TC 1.A.8) family. As to quaternary structure, homotetramer.

The protein localises to the cell inner membrane. The catalysed reaction is H2O(in) = H2O(out). Its function is as follows. Channel that permits osmotically driven movement of water in both directions. It is involved in the osmoregulation and in the maintenance of cell turgor during volume expansion in rapidly growing cells. It mediates rapid entry or exit of water in response to abrupt changes in osmolarity. The chain is Aquaporin Z from Pseudomonas aeruginosa (strain ATCC 15692 / DSM 22644 / CIP 104116 / JCM 14847 / LMG 12228 / 1C / PRS 101 / PAO1).